Here is a 210-residue protein sequence, read N- to C-terminus: N-(5'-phosphoribosyl)anthranilate isomerase (210 aa).

Belongs to the TrpF family.

The catalysed reaction is N-(5-phospho-beta-D-ribosyl)anthranilate = 1-(2-carboxyphenylamino)-1-deoxy-D-ribulose 5-phosphate. It participates in amino-acid biosynthesis; L-tryptophan biosynthesis; L-tryptophan from chorismate: step 3/5. This Crocosphaera subtropica (strain ATCC 51142 / BH68) (Cyanothece sp. (strain ATCC 51142)) protein is N-(5'-phosphoribosyl)anthranilate isomerase.